We begin with the raw amino-acid sequence, 239 residues long: tRNA (guanine-N(1)-)-methyltransferase (239 aa).

S-adenosyl-L-methionine contacts are provided by residues G108 and 127-132 (IGDYVL).

It belongs to the RNA methyltransferase TrmD family. In terms of assembly, homodimer.

The protein resides in the cytoplasm. The enzyme catalyses guanosine(37) in tRNA + S-adenosyl-L-methionine = N(1)-methylguanosine(37) in tRNA + S-adenosyl-L-homocysteine + H(+). Its function is as follows. Specifically methylates guanosine-37 in various tRNAs. This is tRNA (guanine-N(1)-)-methyltransferase from Lactobacillus helveticus (strain DPC 4571).